Consider the following 292-residue polypeptide: Cyclin-dependent kinase A-2 (292 aa).

A Protein kinase domain is found at 4–286; sequence YEKVEKIGEG…ARAALEHEYF (283 aa). ATP-binding positions include 10-18 and Lys-33; that span reads IGEGTYGVV. Thr-14 carries the phosphothreonine modification. Tyr-15 is subject to Phosphotyrosine. Catalysis depends on Asp-126, which acts as the Proton acceptor. The residue at position 160 (Thr-160) is a Phosphothreonine.

The protein belongs to the protein kinase superfamily. CMGC Ser/Thr protein kinase family. CDC2/CDKX subfamily. In terms of tissue distribution, expressed in the dividing region of the root apex and in differentiated cells such as those in the sclerenchyma, pericycle and parenchyma of the central cylinder. Expressed in the intercalary meristem and the elongation zone of internodes.

The catalysed reaction is L-seryl-[protein] + ATP = O-phospho-L-seryl-[protein] + ADP + H(+). The enzyme catalyses L-threonyl-[protein] + ATP = O-phospho-L-threonyl-[protein] + ADP + H(+). It carries out the reaction [DNA-directed RNA polymerase] + ATP = phospho-[DNA-directed RNA polymerase] + ADP + H(+). The protein is Cyclin-dependent kinase A-2 (CDKA-2) of Oryza sativa subsp. japonica (Rice).